Here is a 289-residue protein sequence, read N- to C-terminus: Protease HtpX (289 aa).

The next 2 helical transmembrane spans lie at Ile5 to Leu25 and Met33 to Leu53. His140 contacts Zn(2+). Glu141 is an active-site residue. Zn(2+) is bound at residue His144. Helical transmembrane passes span Leu155 to Ile175 and Gly193 to Phe213. Glu218 serves as a coordination point for Zn(2+).

The protein belongs to the peptidase M48B family. It depends on Zn(2+) as a cofactor.

The protein localises to the cell inner membrane. In Xylella fastidiosa (strain M12), this protein is Protease HtpX.